The chain runs to 213 residues: Protein big brother (213 aa).

Belongs to the CBF-beta family.

It localises to the nucleus. Regulates the DNA-binding properties of Runt. The sequence is that of Protein big brother (Bgb) from Drosophila melanogaster (Fruit fly).